Consider the following 135-residue polypeptide: Large ribosomal subunit protein eL27x (135 aa).

This sequence belongs to the eukaryotic ribosomal protein eL27 family.

The polypeptide is Large ribosomal subunit protein eL27x (RPL27C) (Arabidopsis thaliana (Mouse-ear cress)).